Here is a 145-residue protein sequence, read N- to C-terminus: Acidic phospholipase A2 homolog textilotoxin C chain (145 aa).

An N-terminal signal peptide occupies residues 1 to 19 (MHPAHLLVLLGVYVSLLGA). The propeptide occupies 20–27 (ARIPPLPL). Disulfide bonds link C38-C98, C54-C144, C56-C72, C71-C125, C78-C118, C87-C111, and C105-C116.

It belongs to the phospholipase A2 family. Group I subfamily. D49 sub-subfamily. Heterohexamer. 2 forms exist: 2 A or 2 B chains, 2 C chains and 2 covalently-linked D chains, and 1 A or 1 B, 1 C, 2 covalently-linked D chains and 2 differentially glycosylated covalently-linked D chains. Textilotoxin was originally described as pentameric. As to expression, expressed by the venom gland.

Its subcellular location is the secreted. Snake venom oligomeric phospholipase A2 that has potent presynaptic neurotoxicity. Chain C is not itself neurotoxic, but it is essential for the neurotoxicity of textilotoxin. Chain C possesses a very low phospholipase activity. The protein is Acidic phospholipase A2 homolog textilotoxin C chain of Pseudonaja textilis (Eastern brown snake).